The chain runs to 120 residues: 2-amino-4-hydroxy-6-hydroxymethyldihydropteridine pyrophosphokinase (120 aa).

This sequence belongs to the HPPK family.

The enzyme catalyses 6-hydroxymethyl-7,8-dihydropterin + ATP = (7,8-dihydropterin-6-yl)methyl diphosphate + AMP + H(+). It functions in the pathway cofactor biosynthesis; tetrahydrofolate biosynthesis; 2-amino-4-hydroxy-6-hydroxymethyl-7,8-dihydropteridine diphosphate from 7,8-dihydroneopterin triphosphate: step 4/4. Catalyzes the transfer of pyrophosphate from adenosine triphosphate (ATP) to 6-hydroxymethyl-7,8-dihydropterin, an enzymatic step in folate biosynthesis pathway. The chain is 2-amino-4-hydroxy-6-hydroxymethyldihydropteridine pyrophosphokinase (folK) from Pseudomonas putida (Arthrobacter siderocapsulatus).